Consider the following 896-residue polypeptide: Valine--tRNA ligase (896 aa).

The 'HIGH' region motif lies at 43–53 (PNVTGSLHIGH). The 'KMSKS' region motif lies at 545–549 (KMSKS). Lysine 548 contributes to the ATP binding site. Residues 831–857 (DLDAERARLAKGIAAAEKERDGLAARL) are a coiled coil.

It belongs to the class-I aminoacyl-tRNA synthetase family. ValS type 1 subfamily. As to quaternary structure, monomer.

Its subcellular location is the cytoplasm. It carries out the reaction tRNA(Val) + L-valine + ATP = L-valyl-tRNA(Val) + AMP + diphosphate. In terms of biological role, catalyzes the attachment of valine to tRNA(Val). As ValRS can inadvertently accommodate and process structurally similar amino acids such as threonine, to avoid such errors, it has a 'posttransfer' editing activity that hydrolyzes mischarged Thr-tRNA(Val) in a tRNA-dependent manner. The chain is Valine--tRNA ligase from Rhizorhabdus wittichii (strain DSM 6014 / CCUG 31198 / JCM 15750 / NBRC 105917 / EY 4224 / RW1) (Sphingomonas wittichii).